The chain runs to 525 residues: MWEAQFLGLLFLQPLWVAPVKPLQPGAEVPVVWAQEGAPAQLPCSPTIPLQDLSLLRRAGVTWQHQPDSGPPAAAPGHPLAPGPHPAAPSSWGPRPRRYTVLSVGPGGLRSGRLPLQPRVQLDERGRQRGDFSLWLRPARRADAGEYRAAVHLRDRALSCRLRLRLGQASMTASPPGSLRASDWVILNCSFSRPDRPASVHWFRNRGQGRVPVRESPHHHLAESFLFLPQVSPMDSGPWGCILTYRDGFNVSIMYNLTVLGLEPPTPLTVYAGAGSRVGLPCRLPAGVGTRSFLTAKWTPPGGGPDLLVTGDNGDFTLRLEDVSQAQAGTYTCHIHLQEQQLNATVTLAIITVTPKSFGSPGSLGKLLCEVTPVSGQERFVWSSLDTPSQRSFSGPWLEAQEAQLLSQPWQCQLYQGERLLGAAVYFTELSSPGAQRSGRAPGALPAGHLLLFLILGVLSLLLLVTGAFGFHLWRRQWRPRRFSALEQGIHPPQAQSKIEELEQEPEPEPEPEPEPEPEPEPEQL.

Residues 1–22 (MWEAQFLGLLFLQPLWVAPVKP) form the signal peptide. Residues 23–450 (LQPGAEVPVV…APGALPAGHL (428 aa)) are Extracellular-facing. An Ig-like V-type domain is found at 37–167 (GAPAQLPCSP…LSCRLRLRLG (131 aa)). Positions 37–252 (GAPAQLPCSP…LTYRDGFNVS (216 aa)) are interaction with FGL1. A disulfide bond links cysteine 44 and cysteine 160. The segment at 62 to 97 (TWQHQPDSGPPAAAPGHPLAPGPHPAAPSSWGPRPR) is disordered. Pro residues predominate over residues 69-87 (SGPPAAAPGHPLAPGPHPA). The Ig-like C2-type 1 domain occupies 168–252 (QASMTASPPG…LTYRDGFNVS (85 aa)). An N-linked (GlcNAc...) asparagine glycan is attached at asparagine 188. Residues cysteine 189 and cysteine 241 are joined by a disulfide bond. Asparagine 250 and asparagine 256 each carry an N-linked (GlcNAc...) asparagine glycan. Ig-like C2-type domains lie at 265 to 343 (PTPL…QQLN) and 348 to 419 (LAII…QGER). Cysteines 282 and 333 form a disulfide. Residue asparagine 343 is glycosylated (N-linked (GlcNAc...) asparagine). An intrachain disulfide couples cysteine 369 to cysteine 412. Residues 429–450 (ELSSPGAQRSGRAPGALPAGHL) form a connecting peptide region. The helical transmembrane segment at 451–471 (LLFLILGVLSLLLLVTGAFGF) threads the bilayer. The Cytoplasmic segment spans residues 472–525 (HLWRRQWRPRRFSALEQGIHPPQAQSKIEELEQEPEPEPEPEPEPEPEPEPEQL). The interval 487 to 525 (EQGIHPPQAQSKIEELEQEPEPEPEPEPEPEPEPEPEQL) is disordered. The short motif at 498-503 (KIEELE) is the KIEELE motif element. Residues 501–524 (ELEQEPEPEPEPEPEPEPEPEPEQ) are 12 X 2 AA tandem repeats of E-X. Positions 502–525 (LEQEPEPEPEPEPEPEPEPEPEQL) are enriched in acidic residues.

The protein belongs to the LAG3 family. In terms of assembly, interacts with MHC class II (MHC-II); selectively recognizes stable complexes of peptide and MHC-II. Interacts with FGL1 (via the Fibrinogen C-terminal domain). Proteolytically cleaved by ADAM10 and ADAM17 within the connecting peptide region, leading to release of Secreted lymphocyte activation gene 3 protein (sLAG-3). ADAM10 mediates constitutive cleavage, but cleavage increases following T-cell activation, whereas shedding by ADAM17 is induced by TCR signaling in a PRKCQ-dependent manner. Primarily expressed in activated T-cells and a subset of natural killer (NK) cells.

The protein resides in the cell membrane. The protein localises to the secreted. Functionally, lymphocyte activation gene 3 protein: Inhibitory receptor on antigen activated T-cells. Delivers inhibitory signals upon binding to ligands, such as FGL1. FGL1 constitutes a major ligand of LAG3 and is responsible for LAG3 T-cell inhibitory function. Following TCR engagement, LAG3 associates with CD3-TCR in the immunological synapse and directly inhibits T-cell activation. May inhibit antigen-specific T-cell activation in synergy with PDCD1/PD-1, possibly by acting as a coreceptor for PDCD1/PD-1. Negatively regulates the proliferation, activation, effector function and homeostasis of both CD8(+) and CD4(+) T-cells. Also mediates immune tolerance: constitutively expressed on a subset of regulatory T-cells (Tregs) and contributes to their suppressive function. Also acts as a negative regulator of plasmacytoid dendritic cell (pDCs) activation. Binds MHC class II (MHC-II); the precise role of MHC-II-binding is however unclear. May function as a ligand for MHC class II (MHC-II) on antigen-presenting cells (APC), promoting APC activation/maturation and driving Th1 immune response. The protein is Lymphocyte activation gene 3 protein of Homo sapiens (Human).